Consider the following 678-residue polypeptide: DNA ligase (678 aa).

Residues Asp47–Asp51, Ser96–Leu97, and Glu122 contribute to the NAD(+) site. The N6-AMP-lysine intermediate role is filled by Lys124. Positions 145, 182, 300, and 324 each coordinate NAD(+). Cys418, Cys421, Cys436, and Cys442 together coordinate Zn(2+). Residues Ala602–Leu678 form the BRCT domain.

Belongs to the NAD-dependent DNA ligase family. LigA subfamily. Requires Mg(2+) as cofactor. Mn(2+) is required as a cofactor.

The enzyme catalyses NAD(+) + (deoxyribonucleotide)n-3'-hydroxyl + 5'-phospho-(deoxyribonucleotide)m = (deoxyribonucleotide)n+m + AMP + beta-nicotinamide D-nucleotide.. In terms of biological role, DNA ligase that catalyzes the formation of phosphodiester linkages between 5'-phosphoryl and 3'-hydroxyl groups in double-stranded DNA using NAD as a coenzyme and as the energy source for the reaction. It is essential for DNA replication and repair of damaged DNA. The polypeptide is DNA ligase (Francisella tularensis subsp. novicida (strain U112)).